Here is a 142-residue protein sequence, read N- to C-terminus: uncharacterized protein (142 aa).

The next 2 membrane-spanning stretches (helical) occupy residues 12–29 (NAILRPISDIFVLIYGLL) and 44–66 (IYGQLSLLLWGTKFLATILGVTA).

Its subcellular location is the cell membrane. This is an uncharacterized protein from Archaeoglobus fulgidus (strain ATCC 49558 / DSM 4304 / JCM 9628 / NBRC 100126 / VC-16).